A 342-amino-acid polypeptide reads, in one-letter code: Ribosomal RNA small subunit methyltransferase C (342 aa).

The protein belongs to the methyltransferase superfamily. RsmC family. In terms of assembly, monomer.

It is found in the cytoplasm. The catalysed reaction is guanosine(1207) in 16S rRNA + S-adenosyl-L-methionine = N(2)-methylguanosine(1207) in 16S rRNA + S-adenosyl-L-homocysteine + H(+). Its function is as follows. Specifically methylates the guanine in position 1207 of 16S rRNA in the 30S particle. In Hahella chejuensis (strain KCTC 2396), this protein is Ribosomal RNA small subunit methyltransferase C.